Reading from the N-terminus, the 432-residue chain is 3-phosphoshikimate 1-carboxyvinyltransferase (432 aa).

3 residues coordinate 3-phosphoshikimate: K22, S23, and R27. K22 contacts phosphoenolpyruvate. Residues G96 and R127 each contribute to the phosphoenolpyruvate site. 3-phosphoshikimate-binding residues include S173, S174, Q175, S201, D316, N339, and K343. Q175 provides a ligand contact to phosphoenolpyruvate. The active-site Proton acceptor is D316. Positions 347, 391, and 416 each coordinate phosphoenolpyruvate.

It belongs to the EPSP synthase family. As to quaternary structure, monomer.

It is found in the cytoplasm. The catalysed reaction is 3-phosphoshikimate + phosphoenolpyruvate = 5-O-(1-carboxyvinyl)-3-phosphoshikimate + phosphate. Its pathway is metabolic intermediate biosynthesis; chorismate biosynthesis; chorismate from D-erythrose 4-phosphate and phosphoenolpyruvate: step 6/7. Its function is as follows. Catalyzes the transfer of the enolpyruvyl moiety of phosphoenolpyruvate (PEP) to the 5-hydroxyl of shikimate-3-phosphate (S3P) to produce enolpyruvyl shikimate-3-phosphate and inorganic phosphate. The sequence is that of 3-phosphoshikimate 1-carboxyvinyltransferase from Haemophilus influenzae (strain ATCC 51907 / DSM 11121 / KW20 / Rd).